The primary structure comprises 66 residues: Large ribosomal subunit protein bL28 (66 aa).

Positions 1–26 are disordered; the sequence is MAKDAITGARTRFGNQRSHALNSSRR. Polar residues predominate over residues 13–25; it reads FGNQRSHALNSSR.

It belongs to the bacterial ribosomal protein bL28 family.

The polypeptide is Large ribosomal subunit protein bL28 (Leuconostoc mesenteroides subsp. mesenteroides (strain ATCC 8293 / DSM 20343 / BCRC 11652 / CCM 1803 / JCM 6124 / NCDO 523 / NBRC 100496 / NCIMB 8023 / NCTC 12954 / NRRL B-1118 / 37Y)).